The sequence spans 111 residues: Nascent polypeptide-associated complex protein (111 aa).

The region spanning 3–72 is the NAC-A/B domain; that stretch reads GMNPRQMKKL…EEVREVLEIS (70 aa).

Belongs to the NAC-alpha family. In terms of assembly, homodimer. Interacts with the ribosome. Binds ribosomal RNA.

Contacts the emerging nascent chain on the ribosome. The polypeptide is Nascent polypeptide-associated complex protein (Thermococcus kodakarensis (strain ATCC BAA-918 / JCM 12380 / KOD1) (Pyrococcus kodakaraensis (strain KOD1))).